A 241-amino-acid chain; its full sequence is Carboxy-S-adenosyl-L-methionine synthase (241 aa).

S-adenosyl-L-methionine-binding positions include tyrosine 38, 63–65 (GCS), 88–89 (DN), 116–117 (DI), asparagine 131, and arginine 198.

This sequence belongs to the class I-like SAM-binding methyltransferase superfamily. Cx-SAM synthase family. In terms of assembly, homodimer.

The catalysed reaction is prephenate + S-adenosyl-L-methionine = carboxy-S-adenosyl-L-methionine + 3-phenylpyruvate + H2O. Its function is as follows. Catalyzes the conversion of S-adenosyl-L-methionine (SAM) to carboxy-S-adenosyl-L-methionine (Cx-SAM). The polypeptide is Carboxy-S-adenosyl-L-methionine synthase (Actinobacillus pleuropneumoniae serotype 5b (strain L20)).